Here is a 322-residue protein sequence, read N- to C-terminus: Transaldolase (322 aa).

The active-site Schiff-base intermediate with substrate is the lysine 136.

Belongs to the transaldolase family. Type 1 subfamily. As to quaternary structure, homodimer.

It is found in the cytoplasm. The catalysed reaction is D-sedoheptulose 7-phosphate + D-glyceraldehyde 3-phosphate = D-erythrose 4-phosphate + beta-D-fructose 6-phosphate. It participates in carbohydrate degradation; pentose phosphate pathway; D-glyceraldehyde 3-phosphate and beta-D-fructose 6-phosphate from D-ribose 5-phosphate and D-xylulose 5-phosphate (non-oxidative stage): step 2/3. Its function is as follows. Transaldolase is important for the balance of metabolites in the pentose-phosphate pathway. In Xanthomonas euvesicatoria pv. vesicatoria (strain 85-10) (Xanthomonas campestris pv. vesicatoria), this protein is Transaldolase.